Reading from the N-terminus, the 86-residue chain is Polcalcin Nic t 2 (86 aa).

2 EF-hand domains span residues glutamine 8–serine 42 and valine 43–leucine 78. The Ca(2+) site is built by aspartate 21, asparagine 23, aspartate 25, glutamine 27, glutamate 32, aspartate 56, asparagine 58, aspartate 60, and glutamate 67.

The protein is Polcalcin Nic t 2 (Nict2) of Nicotiana tabacum (Common tobacco).